Consider the following 396-residue polypeptide: Elongation factor Tu (396 aa).

Positions 10 to 206 constitute a tr-type G domain; that stretch reads KPHVNIGTIG…AVDEYIPDPV (197 aa). The segment at 19-26 is G1; it reads GHVDHGKT. Position 19 to 26 (19 to 26) interacts with GTP; the sequence is GHVDHGKT. Thr26 is a Mg(2+) binding site. Positions 62–66 are G2; it reads GITIN. Residues 83-86 form a G3 region; it reads DAPG. Residues 83-87 and 138-141 each bind GTP; these read DAPGH and NKSD. Positions 138–141 are G4; sequence NKSD. The segment at 176-178 is G5; that stretch reads SGL.

Belongs to the TRAFAC class translation factor GTPase superfamily. Classic translation factor GTPase family. EF-Tu/EF-1A subfamily. In terms of assembly, monomer.

The protein resides in the cytoplasm. It catalyses the reaction GTP + H2O = GDP + phosphate + H(+). Its function is as follows. GTP hydrolase that promotes the GTP-dependent binding of aminoacyl-tRNA to the A-site of ribosomes during protein biosynthesis. In Micrococcus luteus (strain ATCC 4698 / DSM 20030 / JCM 1464 / CCM 169 / CCUG 5858 / IAM 1056 / NBRC 3333 / NCIMB 9278 / NCTC 2665 / VKM Ac-2230) (Micrococcus lysodeikticus), this protein is Elongation factor Tu.